Reading from the N-terminus, the 481-residue chain is Aspartyl/glutamyl-tRNA(Asn/Gln) amidotransferase subunit B (481 aa).

Belongs to the GatB/GatE family. GatB subfamily. As to quaternary structure, heterotrimer of A, B and C subunits.

It carries out the reaction L-glutamyl-tRNA(Gln) + L-glutamine + ATP + H2O = L-glutaminyl-tRNA(Gln) + L-glutamate + ADP + phosphate + H(+). The catalysed reaction is L-aspartyl-tRNA(Asn) + L-glutamine + ATP + H2O = L-asparaginyl-tRNA(Asn) + L-glutamate + ADP + phosphate + 2 H(+). Its function is as follows. Allows the formation of correctly charged Asn-tRNA(Asn) or Gln-tRNA(Gln) through the transamidation of misacylated Asp-tRNA(Asn) or Glu-tRNA(Gln) in organisms which lack either or both of asparaginyl-tRNA or glutaminyl-tRNA synthetases. The reaction takes place in the presence of glutamine and ATP through an activated phospho-Asp-tRNA(Asn) or phospho-Glu-tRNA(Gln). This is Aspartyl/glutamyl-tRNA(Asn/Gln) amidotransferase subunit B from Ehrlichia chaffeensis (strain ATCC CRL-10679 / Arkansas).